A 374-amino-acid chain; its full sequence is MALHSLIADARRLVVKVGSSLVTNDGRGLDQAAIARWAAQIAALRAAGKEVVLVSSGAIAEGMQRLGWAKRPKEIHELQAAAAVGQMGLAQVYESEFARHSIRTAQVLLTHGDLADRERYLNARSTLLTLLSLGVVPIINENDTVVTDEIKFGDNDTLGALVTNLIEGDALIILTDQRGLYTADPRKDPGARFVDEAQAGTPDLEQMAGGAGSSIGKGGMLTKILAAKRAAKSGAHTIIASGREADVLARLASGEAIGTQLRAPTGRMAARKQWMIDHLQLRGRVVLDAGAVEKLTAGGKSLLPIGVTEVQGEFARGEVISCVDAAGLEVARGLTNYSSAEARLIARKASSEIEAVLGYVSAAELVHRDNLVLL.

ATP is bound at residue K16. Substrate-binding residues include S56, D143, and N155. Position 175-176 (175-176 (TD)) interacts with ATP. Positions 282-360 (RGRVVLDAGA…SEIEAVLGYV (79 aa)) constitute a PUA domain.

Belongs to the glutamate 5-kinase family.

The protein resides in the cytoplasm. The catalysed reaction is L-glutamate + ATP = L-glutamyl 5-phosphate + ADP. Its pathway is amino-acid biosynthesis; L-proline biosynthesis; L-glutamate 5-semialdehyde from L-glutamate: step 1/2. In terms of biological role, catalyzes the transfer of a phosphate group to glutamate to form L-glutamate 5-phosphate. The protein is Glutamate 5-kinase of Ralstonia pickettii (strain 12J).